Reading from the N-terminus, the 107-residue chain is Disintegrin lebestatin (107 aa).

Positions Met1–Ser20 are cleaved as a signal peptide. Residues Lys21–Leu64 constitute a propeptide that is removed on maturation. 4 cysteine pairs are disulfide-bonded: Cys65–Cys74, Cys70–Cys93, Cys71–Cys98, and Cys83–Cys100. The Disintegrin domain occupies Cys65–Gly105. The Cell attachment site; atypical (KTS) signature appears at Lys85–Ser87. Positions Asn106–Gly107 are excised as a propeptide.

Monomer. In terms of tissue distribution, expressed by the venom gland.

Its subcellular location is the secreted. Its function is as follows. Specifically interacts with the alpha-1/beta-1 integrin (ITGA1/ITGB1). Exhibits highly inhibitory effects on cell adhesion and cell migration to collagens I and IV. Also shows in vivo anti-angiogenic activity. The chain is Disintegrin lebestatin from Macrovipera lebetinus (Levantine viper).